Reading from the N-terminus, the 427-residue chain is 3-phosphoshikimate 1-carboxyvinyltransferase (427 aa).

Residues lysine 20, serine 21, and arginine 25 each contribute to the 3-phosphoshikimate site. Phosphoenolpyruvate is bound at residue lysine 20. Positions 92 and 120 each coordinate phosphoenolpyruvate. Residues serine 166, glutamine 168, aspartate 312, and lysine 339 each coordinate 3-phosphoshikimate. Glutamine 168 contributes to the phosphoenolpyruvate binding site. Aspartate 312 functions as the Proton acceptor in the catalytic mechanism. Phosphoenolpyruvate is bound by residues arginine 343 and arginine 385.

Belongs to the EPSP synthase family. As to quaternary structure, monomer.

The protein resides in the cytoplasm. It carries out the reaction 3-phosphoshikimate + phosphoenolpyruvate = 5-O-(1-carboxyvinyl)-3-phosphoshikimate + phosphate. It participates in metabolic intermediate biosynthesis; chorismate biosynthesis; chorismate from D-erythrose 4-phosphate and phosphoenolpyruvate: step 6/7. Catalyzes the transfer of the enolpyruvyl moiety of phosphoenolpyruvate (PEP) to the 5-hydroxyl of shikimate-3-phosphate (S3P) to produce enolpyruvyl shikimate-3-phosphate and inorganic phosphate. The protein is 3-phosphoshikimate 1-carboxyvinyltransferase of Streptococcus pneumoniae serotype 2 (strain D39 / NCTC 7466).